The primary structure comprises 150 residues: Non-specific lipid transfer protein GPI-anchored 7 (150 aa).

The signal sequence occupies residues 1–25 (MTKTMMIFAAAMTVMALLLVPTIEA). Cystine bridges form between cysteine 29-cysteine 66, cysteine 36-cysteine 50, cysteine 51-cysteine 92, and cysteine 64-cysteine 101. Asparagine 41, asparagine 79, and asparagine 93 each carry an N-linked (GlcNAc...) asparagine glycan. The interval 103–125 (AKGAPSPKASLPPPAPAGNTKKD) is disordered. Aspartate 125 is lipidated: GPI-anchor amidated aspartate. The propeptide at 126–150 (AGAGNKLAGYGVTTVILSLISSIFF) is removed in mature form.

It belongs to the plant LTP family. In terms of tissue distribution, up-regulated in the epidermis of stems.

Its subcellular location is the cell membrane. In terms of biological role, probable lipid transfer protein. The chain is Non-specific lipid transfer protein GPI-anchored 7 from Arabidopsis thaliana (Mouse-ear cress).